The primary structure comprises 815 residues: Protein pygopus (815 aa).

2 disordered regions span residues M1–A107 and G147–G711. The Nuclear localization signal signature appears at P39–T45. Over residues S46–A73 the composition is skewed to low complexity. Residues P74–M86 show a composition bias toward pro residues. The segment covering R188–G199 has biased composition (low complexity). 2 stretches are compositionally biased toward gly residues: residues P230 to G248 and G257 to N269. The segment covering L307–G316 has biased composition (pro residues). Low complexity-rich tracts occupy residues G323–M341, S407–P424, P444–S478, and G495–H545. Over residues P569–P580 the composition is skewed to pro residues. The span at G602 to P621 shows a compositional bias: gly residues. Low complexity predominate over residues N622–H636. Positions G640–N656 are enriched in gly residues. The span at M663–N675 shows a compositional bias: basic residues. Positions G678–G711 are enriched in gly residues. Residues I747–S805 form a PHD-type zinc finger.

In terms of assembly, binds to BCL9 via the PHD-type zinc finger motif, and thereby becomes part of the nuclear ARM/PAN complex. In terms of tissue distribution, ubiquitous throughout embryogenesis and larval development.

The protein localises to the nucleus. Functionally, involved in signal transduction through the Wnt pathway. The protein is Protein pygopus (pygo) of Drosophila melanogaster (Fruit fly).